A 494-amino-acid chain; its full sequence is ATP synthase subunit beta, chloroplastic (494 aa).

Position 172–179 (172–179 (GGAGVGKT)) interacts with ATP.

This sequence belongs to the ATPase alpha/beta chains family. F-type ATPases have 2 components, CF(1) - the catalytic core - and CF(0) - the membrane proton channel. CF(1) has five subunits: alpha(3), beta(3), gamma(1), delta(1), epsilon(1). CF(0) has four main subunits: a(1), b(1), b'(1) and c(9-12).

Its subcellular location is the plastid. The protein resides in the chloroplast thylakoid membrane. It catalyses the reaction ATP + H2O + 4 H(+)(in) = ADP + phosphate + 5 H(+)(out). Functionally, produces ATP from ADP in the presence of a proton gradient across the membrane. The catalytic sites are hosted primarily by the beta subunits. In Physcomitrium patens (Spreading-leaved earth moss), this protein is ATP synthase subunit beta, chloroplastic.